A 455-amino-acid chain; its full sequence is Ectonucleoside triphosphate diphosphohydrolase 6 (455 aa).

The Cytoplasmic segment spans residues M1–M12. A helical transmembrane segment spans residues T13–I32. Residues K33–L455 are Lumenal-facing. E196 serves as the catalytic Proton acceptor. Intrachain disulfides connect C297-C327 and C387-C401.

It belongs to the GDA1/CD39 NTPase family. The cofactor is Mg(2+). It depends on Ca(2+) as a cofactor. N-glycosylated.

It is found in the golgi apparatus membrane. The protein resides in the secreted. It localises to the cell membrane. The catalysed reaction is a ribonucleoside 5'-diphosphate + H2O = a ribonucleoside 5'-phosphate + phosphate + H(+). It carries out the reaction IDP + H2O = IMP + phosphate + H(+). The enzyme catalyses GDP + H2O = GMP + phosphate + H(+). It catalyses the reaction UDP + H2O = UMP + phosphate + H(+). Its function is as follows. Catalyzes the hydrolysis of nucleoside triphosphates and diphosphates in a calcium- or magnesium-dependent manner. Has a strong preference for nucleoside diphosphates, preferentially hydrolyzes GDP, IDP, and UDP, with slower hydrolysis of CDP, ITP, GTP, CTP, ADP, and UTP and virtually no hydrolysis of ATP. The membrane bound form might support glycosylation reactions in the Golgi apparatus and, when released from cells, might catalyze the hydrolysis of extracellular nucleotides. The protein is Ectonucleoside triphosphate diphosphohydrolase 6 of Mus musculus (Mouse).